We begin with the raw amino-acid sequence, 217 residues long: tRNA (guanine-N(7)-)-methyltransferase (217 aa).

Residues E45, E70, D97, and D119 each coordinate S-adenosyl-L-methionine. Residue D119 is part of the active site. K123 serves as a coordination point for substrate. An interaction with RNA region spans residues 125 to 130; sequence RHEKRR. Substrate is bound by residues D155 and 195–198; that span reads TEYE.

The protein belongs to the class I-like SAM-binding methyltransferase superfamily. TrmB family.

The catalysed reaction is guanosine(46) in tRNA + S-adenosyl-L-methionine = N(7)-methylguanosine(46) in tRNA + S-adenosyl-L-homocysteine. It functions in the pathway tRNA modification; N(7)-methylguanine-tRNA biosynthesis. Functionally, catalyzes the formation of N(7)-methylguanine at position 46 (m7G46) in tRNA. The polypeptide is tRNA (guanine-N(7)-)-methyltransferase (Lactobacillus helveticus (strain DPC 4571)).